The primary structure comprises 217 residues: Phosphatidylserine decarboxylase proenzyme (217 aa).

Residue serine 182 is the Schiff-base intermediate with substrate; via pyruvic acid of the active site. The residue at position 182 (serine 182) is a Pyruvic acid (Ser); by autocatalysis.

Belongs to the phosphatidylserine decarboxylase family. PSD-A subfamily. In terms of assembly, heterodimer of a large membrane-associated beta subunit and a small pyruvoyl-containing alpha subunit. Pyruvate is required as a cofactor. Is synthesized initially as an inactive proenzyme. Formation of the active enzyme involves a self-maturation process in which the active site pyruvoyl group is generated from an internal serine residue via an autocatalytic post-translational modification. Two non-identical subunits are generated from the proenzyme in this reaction, and the pyruvate is formed at the N-terminus of the alpha chain, which is derived from the carboxyl end of the proenzyme. The post-translation cleavage follows an unusual pathway, termed non-hydrolytic serinolysis, in which the side chain hydroxyl group of the serine supplies its oxygen atom to form the C-terminus of the beta chain, while the remainder of the serine residue undergoes an oxidative deamination to produce ammonia and the pyruvoyl prosthetic group on the alpha chain.

It localises to the cell membrane. It catalyses the reaction a 1,2-diacyl-sn-glycero-3-phospho-L-serine + H(+) = a 1,2-diacyl-sn-glycero-3-phosphoethanolamine + CO2. The protein operates within phospholipid metabolism; phosphatidylethanolamine biosynthesis; phosphatidylethanolamine from CDP-diacylglycerol: step 2/2. Functionally, catalyzes the formation of phosphatidylethanolamine (PtdEtn) from phosphatidylserine (PtdSer). The polypeptide is Phosphatidylserine decarboxylase proenzyme (Prosthecochloris aestuarii (strain DSM 271 / SK 413)).